The following is an 846-amino-acid chain: Choline trimethylamine-lyase (846 aa).

The PFL domain maps to 60–718; that stretch reads PRHVKLKENF…LLGASANGRR (659 aa). Residue cysteine 489 is the Cysteine radical intermediate of the active site. The active-site Proton acceptor is the glutamate 491. Positions 725 to 846 constitute a Glycine radical domain; it reads DGISPTQGAD…IISRTMLHGF (122 aa). The residue at position 821 (glycine 821) is a Glycine radical.

Belongs to the glycyl radical enzyme (GRE) family. CutC subfamily. As to quaternary structure, homodimer. Post-translationally, requires the activating protein CutD to generate the key active site glycyl radical on Gly-821 that is involved in catalysis.

The enzyme catalyses choline = trimethylamine + acetaldehyde. Its pathway is amine and polyamine metabolism; choline degradation. In terms of biological role, glycine radical enzyme that catalyzes the cleavage of a C-N bond in choline, producing trimethylamine (TMA) and acetaldehyde. Is involved in the anaerobic choline utilization pathway that allows D.alaskensis to grow on choline as a source of carbon and energy. Is strictly specific for choline as substrate. This Oleidesulfovibrio alaskensis (strain ATCC BAA-1058 / DSM 17464 / G20) (Desulfovibrio alaskensis) protein is Choline trimethylamine-lyase.